The sequence spans 403 residues: Phosphoglycerate kinase (403 aa).

Residues 21–23 (DFN), arginine 36, 59–62 (HLGR), arginine 119, and arginine 154 each bind substrate. Residues lysine 207, glycine 299, glutamate 330, and 357 to 360 (GGDA) contribute to the ATP site.

Belongs to the phosphoglycerate kinase family. In terms of assembly, monomer.

The protein resides in the cytoplasm. The catalysed reaction is (2R)-3-phosphoglycerate + ATP = (2R)-3-phospho-glyceroyl phosphate + ADP. It participates in carbohydrate degradation; glycolysis; pyruvate from D-glyceraldehyde 3-phosphate: step 2/5. The protein is Phosphoglycerate kinase of Chlamydia felis (strain Fe/C-56) (Chlamydophila felis).